A 468-amino-acid polypeptide reads, in one-letter code: 6-phospho-beta-galactosidase (468 aa).

5 residues coordinate D-galactose 6-phosphate: glutamine 19, histidine 116, asparagine 159, glutamate 160, and asparagine 297. Glutamate 160 functions as the Proton donor in the catalytic mechanism. Glutamate 375 acts as the Nucleophile in catalysis. 4 residues coordinate D-galactose 6-phosphate: serine 428, tryptophan 429, lysine 435, and tyrosine 437.

This sequence belongs to the glycosyl hydrolase 1 family.

It carries out the reaction a 6-phospho-beta-D-galactoside + H2O = D-galactose 6-phosphate + an alcohol. It participates in carbohydrate metabolism; lactose degradation; D-galactose 6-phosphate and beta-D-glucose from lactose 6-phosphate: step 1/1. This chain is 6-phospho-beta-galactosidase, found in Streptococcus pyogenes serotype M1.